The primary structure comprises 311 residues: Aspartate carbamoyltransferase catalytic subunit (311 aa).

Carbamoyl phosphate is bound by residues arginine 58 and threonine 59. Lysine 86 provides a ligand contact to L-aspartate. Residues arginine 108, histidine 136, and glutamine 139 each contribute to the carbamoyl phosphate site. Residues arginine 169 and arginine 223 each contribute to the L-aspartate site. 2 residues coordinate carbamoyl phosphate: glycine 264 and proline 265.

It belongs to the aspartate/ornithine carbamoyltransferase superfamily. ATCase family. As to quaternary structure, heterododecamer (2C3:3R2) of six catalytic PyrB chains organized as two trimers (C3), and six regulatory PyrI chains organized as three dimers (R2).

It carries out the reaction carbamoyl phosphate + L-aspartate = N-carbamoyl-L-aspartate + phosphate + H(+). Its pathway is pyrimidine metabolism; UMP biosynthesis via de novo pathway; (S)-dihydroorotate from bicarbonate: step 2/3. In terms of biological role, catalyzes the condensation of carbamoyl phosphate and aspartate to form carbamoyl aspartate and inorganic phosphate, the committed step in the de novo pyrimidine nucleotide biosynthesis pathway. This Acidiphilium cryptum (strain JF-5) protein is Aspartate carbamoyltransferase catalytic subunit.